The primary structure comprises 359 residues: Fructose-1,6-bisphosphatase class 1 (359 aa).

Mg(2+) contacts are provided by Glu95, Asp117, Leu119, and Asp120. Substrate-binding positions include 120 to 123 and Asn212; that span reads DGSS. Glu284 provides a ligand contact to Mg(2+).

This sequence belongs to the FBPase class 1 family. As to quaternary structure, homotetramer. The cofactor is Mg(2+).

Its subcellular location is the cytoplasm. It carries out the reaction beta-D-fructose 1,6-bisphosphate + H2O = beta-D-fructose 6-phosphate + phosphate. The protein operates within carbohydrate biosynthesis; gluconeogenesis. The protein is Fructose-1,6-bisphosphatase class 1 of Hydrogenophilus thermoluteolus (Pseudomonas hydrogenothermophila).